A 656-amino-acid polypeptide reads, in one-letter code: DNA ligase (656 aa).

NAD(+) contacts are provided by residues 32–36 and 81–82; these read DAVYD and SL. Catalysis depends on Lys-112, which acts as the N6-AMP-lysine intermediate. 3 residues coordinate NAD(+): Arg-133, Glu-167, and Lys-306. Zn(2+) is bound by residues Cys-400, Cys-403, Cys-416, and Cys-421. Residues 577–656 form the BRCT domain; it reads KSSSVFSDKT…ELLKRLKELD (80 aa).

This sequence belongs to the NAD-dependent DNA ligase family. LigA subfamily. Mg(2+) is required as a cofactor. The cofactor is Mn(2+).

The catalysed reaction is NAD(+) + (deoxyribonucleotide)n-3'-hydroxyl + 5'-phospho-(deoxyribonucleotide)m = (deoxyribonucleotide)n+m + AMP + beta-nicotinamide D-nucleotide.. DNA ligase that catalyzes the formation of phosphodiester linkages between 5'-phosphoryl and 3'-hydroxyl groups in double-stranded DNA using NAD as a coenzyme and as the energy source for the reaction. It is essential for DNA replication and repair of damaged DNA. This is DNA ligase from Helicobacter pylori (strain J99 / ATCC 700824) (Campylobacter pylori J99).